Here is a 212-residue protein sequence, read N- to C-terminus: 2,3-bisphosphoglycerate-dependent phosphoglycerate mutase (212 aa).

Residues 9 to 16, 22 to 23, arginine 61, 88 to 91, lysine 99, 115 to 116, and 159 to 160 contribute to the substrate site; these read RHGQSEWN, TG, ERDY, RR, and GN. Residue histidine 10 is the Tele-phosphohistidine intermediate of the active site. Catalysis depends on glutamate 88, which acts as the Proton donor/acceptor.

Belongs to the phosphoglycerate mutase family. BPG-dependent PGAM subfamily. In terms of assembly, homodimer.

It catalyses the reaction (2R)-2-phosphoglycerate = (2R)-3-phosphoglycerate. It functions in the pathway carbohydrate degradation; glycolysis; pyruvate from D-glyceraldehyde 3-phosphate: step 3/5. Its function is as follows. Catalyzes the interconversion of 2-phosphoglycerate and 3-phosphoglycerate. This is 2,3-bisphosphoglycerate-dependent phosphoglycerate mutase from Methylorubrum populi (strain ATCC BAA-705 / NCIMB 13946 / BJ001) (Methylobacterium populi).